Reading from the N-terminus, the 630-residue chain is tRNA uridine 5-carboxymethylaminomethyl modification enzyme MnmG (630 aa).

FAD is bound by residues 13–18 (GGGHAG), V125, and S180. Position 273–287 (273–287 (GPRYCPSIEDKIHRF)) interacts with NAD(+). Q370 is an FAD binding site.

This sequence belongs to the MnmG family. In terms of assembly, homodimer. Heterotetramer of two MnmE and two MnmG subunits. The cofactor is FAD.

The protein localises to the cytoplasm. In terms of biological role, NAD-binding protein involved in the addition of a carboxymethylaminomethyl (cmnm) group at the wobble position (U34) of certain tRNAs, forming tRNA-cmnm(5)s(2)U34. The sequence is that of tRNA uridine 5-carboxymethylaminomethyl modification enzyme MnmG from Shewanella woodyi (strain ATCC 51908 / MS32).